Consider the following 274-residue polypeptide: Tryptophan synthase alpha chain (274 aa).

Active-site proton acceptor residues include Glu49 and Asp60.

The protein belongs to the TrpA family. In terms of assembly, tetramer of two alpha and two beta chains.

It catalyses the reaction (1S,2R)-1-C-(indol-3-yl)glycerol 3-phosphate + L-serine = D-glyceraldehyde 3-phosphate + L-tryptophan + H2O. It participates in amino-acid biosynthesis; L-tryptophan biosynthesis; L-tryptophan from chorismate: step 5/5. The alpha subunit is responsible for the aldol cleavage of indoleglycerol phosphate to indole and glyceraldehyde 3-phosphate. The polypeptide is Tryptophan synthase alpha chain (Gluconacetobacter diazotrophicus (strain ATCC 49037 / DSM 5601 / CCUG 37298 / CIP 103539 / LMG 7603 / PAl5)).